Here is a 233-residue protein sequence, read N- to C-terminus: Cytidylate kinase (233 aa).

15–23 serves as a coordination point for ATP; that stretch reads GPSGAGKSS. A compositionally biased stretch (basic and acidic residues) spans 183–200; that stretch reads QRDRQDEGREHAPLKQAE. Positions 183 to 203 are disordered; sequence QRDRQDEGREHAPLKQAEDAV.

The protein belongs to the cytidylate kinase family. Type 1 subfamily.

It is found in the cytoplasm. The catalysed reaction is CMP + ATP = CDP + ADP. The enzyme catalyses dCMP + ATP = dCDP + ADP. This chain is Cytidylate kinase, found in Geobacter sp. (strain M21).